The primary structure comprises 181 residues: Sodium/potassium-transporting ATPase subunit beta-1-interacting protein 3 (181 aa).

The next 4 membrane-spanning stretches (helical) occupy residues 5-22 (TGRCTLIFICTLQMLVAL), 35-55 (APILGNFLHIIVVILGLFGTI), 62-82 (IVAYTIWTAFWVAWNVFIICF), and 151-171 (AVQILLSLIGFVYACYVISVI).

Belongs to the NKAIN family. As to quaternary structure, interacts with atp1b1 C-terminus.

The protein resides in the cell membrane. This is Sodium/potassium-transporting ATPase subunit beta-1-interacting protein 3 (nkain3) from Xenopus tropicalis (Western clawed frog).